The primary structure comprises 331 residues: Biotin synthase (331 aa).

One can recognise a Radical SAM core domain in the interval 52–277 (PDVEVEGIIS…RTMLRFAGGR (226 aa)). [4Fe-4S] cluster contacts are provided by Cys-67, Cys-71, and Cys-74. The [2Fe-2S] cluster site is built by Cys-110, Cys-143, Cys-202, and Arg-272.

Belongs to the radical SAM superfamily. Biotin synthase family. Homodimer. [4Fe-4S] cluster serves as cofactor. It depends on [2Fe-2S] cluster as a cofactor.

It catalyses the reaction (4R,5S)-dethiobiotin + (sulfur carrier)-SH + 2 reduced [2Fe-2S]-[ferredoxin] + 2 S-adenosyl-L-methionine = (sulfur carrier)-H + biotin + 2 5'-deoxyadenosine + 2 L-methionine + 2 oxidized [2Fe-2S]-[ferredoxin]. Its pathway is cofactor biosynthesis; biotin biosynthesis; biotin from 7,8-diaminononanoate: step 2/2. Its function is as follows. Catalyzes the conversion of dethiobiotin (DTB) to biotin by the insertion of a sulfur atom into dethiobiotin via a radical-based mechanism. This Mycolicibacterium vanbaalenii (strain DSM 7251 / JCM 13017 / BCRC 16820 / KCTC 9966 / NRRL B-24157 / PYR-1) (Mycobacterium vanbaalenii) protein is Biotin synthase.